The sequence spans 375 residues: Fructose-1,6-bisphosphate aldolase/phosphatase (375 aa).

Aspartate 15 functions as the Proton acceptor; for FBP phosphatase activity in the catalytic mechanism. Aspartate 15, histidine 22, aspartate 56, and aspartate 57 together coordinate Mg(2+). Histidine 22 is a binding site for beta-D-fructose 1,6-bisphosphate. Histidine 22 contributes to the dihydroxyacetone phosphate binding site. Tyrosine 94 serves as a coordination point for beta-D-fructose 1,6-bisphosphate. Glutamine 98 is a Mg(2+) binding site. Residue 107 to 108 (GN) coordinates beta-D-fructose 1,6-bisphosphate. Mg(2+) is bound at residue aspartate 135. Lysine 136 is a beta-D-fructose 1,6-bisphosphate binding site. Lysine 136 lines the dihydroxyacetone phosphate pocket. The active-site Proton donor/acceptor; for FBP aldolase activity is the tyrosine 237. Residues lysine 240, aspartate 241, and aspartate 242 each contribute to the Mg(2+) site. Lysine 240 acts as the Schiff-base intermediate with DHAP; for FBP aldolase activity in catalysis. Beta-D-fructose 1,6-bisphosphate-binding positions include 250–251 (QS), arginine 274, aspartate 295, and tyrosine 357. 2 residues coordinate dihydroxyacetone phosphate: arginine 274 and aspartate 295.

Belongs to the FBP aldolase/phosphatase family. Homooctamer; dimer of tetramers. The cofactor is Mg(2+).

It carries out the reaction beta-D-fructose 1,6-bisphosphate + H2O = beta-D-fructose 6-phosphate + phosphate. It catalyses the reaction beta-D-fructose 1,6-bisphosphate = D-glyceraldehyde 3-phosphate + dihydroxyacetone phosphate. Its pathway is carbohydrate biosynthesis; gluconeogenesis. Its activity is regulated as follows. Activity is enhanced by dithioerythritol, and is slightly inhibited by fructose 2,6-bisphosphate. AMP does not inhibit the enzyme activity. Catalyzes two subsequent steps in gluconeogenesis: the aldol condensation of dihydroxyacetone phosphate (DHAP) and glyceraldehyde-3-phosphate (GA3P) to fructose-1,6-bisphosphate (FBP), and the dephosphorylation of FBP to fructose-6-phosphate (F6P). Does not display hydrolase activity against fructose 2,6-bisphosphate, fructose 6-phosphate, fructose 1-phosphate, glucose 6-phosphate, and glucose 1-phosphate. Exhibits only negligible activity on inositol-1-phosphate (IMP). Is essential for the growth of T.kodakaraensis under gluconeogenic conditions. In Thermococcus kodakarensis (strain ATCC BAA-918 / JCM 12380 / KOD1) (Pyrococcus kodakaraensis (strain KOD1)), this protein is Fructose-1,6-bisphosphate aldolase/phosphatase.